The primary structure comprises 185 residues: Orotate phosphoribosyltransferase (185 aa).

5-phospho-alpha-D-ribose 1-diphosphate contacts are provided by residues arginine 98, lysine 99, lysine 102, histidine 104, and 128–136 (EDVTTTGGS). 2 residues coordinate orotate: threonine 132 and arginine 160.

Belongs to the purine/pyrimidine phosphoribosyltransferase family. PyrE subfamily. In terms of assembly, homodimer. Mg(2+) is required as a cofactor.

The enzyme catalyses orotidine 5'-phosphate + diphosphate = orotate + 5-phospho-alpha-D-ribose 1-diphosphate. Its pathway is pyrimidine metabolism; UMP biosynthesis via de novo pathway; UMP from orotate: step 1/2. Functionally, catalyzes the transfer of a ribosyl phosphate group from 5-phosphoribose 1-diphosphate to orotate, leading to the formation of orotidine monophosphate (OMP). This chain is Orotate phosphoribosyltransferase, found in Bradyrhizobium sp. (strain ORS 278).